We begin with the raw amino-acid sequence, 28 residues long: C-hordein (28 aa).

Residues 1-28 form a disordered region; sequence RQLNPSSQELQSPQQSYLQQPYPQNPYL.

Developing endosperm.

Functionally, sulfur-poor seed storage protein. The protein is C-hordein of Hordeum vulgare subsp. spontaneum (Wild barley).